Reading from the N-terminus, the 585-residue chain is Frizzled-10 (585 aa).

An N-terminal signal peptide occupies residues 1–24 (MGPAAGNLVRAVLALCWLAEHCAG). Residues 25–229 (ISSIDIERPG…DVYWSKDDKQ (205 aa)) lie on the Extracellular side of the membrane. The region spanning 33-154 (PGDGRCQPIE…NDPNYLCMEA (122 aa)) is the FZ domain. Intrachain disulfides connect C38-C99, C46-C92, C83-C121, C110-C151, and C114-C138. A glycan (N-linked (GlcNAc...) asparagine) is linked at N52. Positions 155-195 (PNNGSDEPPRGSSMLPPMFRPQRPSTGHDLQQHKDSLSRTS) are disordered. A glycan (N-linked (GlcNAc...) asparagine) is linked at N157. Residues 230–250 (FAVIWIAIWSILCFFSSAFTV) traverse the membrane as a helical segment. Residues 251 to 265 (LTFLIDPQRFKYPER) are Cytoplasmic-facing. Residues 266 to 286 (PIIFLSMCYCVYSVGYIIRLF) form a helical membrane-spanning segment. The Extracellular portion of the chain corresponds to 287–314 (SGAESIACDRDSGQLYVIQEGLESTGCT). A helical membrane pass occupies residues 315-335 (IVFLVLYYFGMASSLWWVILT). The Cytoplasmic segment spans residues 336-355 (LTWFLAAGKKWGHEAIEANS). A helical transmembrane segment spans residues 356–376 (SYFHLAAWAIPAVKTIMILVM). At 377 to 397 (RRVAGDELTGLCYVGSMDVNA) the chain is on the extracellular side. The helical transmembrane segment at 398 to 418 (LTGFVLIPLACYLIIGTSFIL) threads the bilayer. At 419–447 (SGFVALFHIRRVMKTGGENTDKLEKLMVR) the chain is on the cytoplasmic side. A helical membrane pass occupies residues 448-468 (IGVFSVLYTVPATCVIACYFY). Topologically, residues 469 to 506 (ERLNMDYWKIVASQQKCKMNNQTKNLDCMMNNSIPAVE) are extracellular. N-linked (GlcNAc...) asparagine glycosylation is found at N489 and N499. The chain crosses the membrane as a helical span at residues 507–527 (IFMVKIFMLLVVGITSGMWIW). The Cytoplasmic segment spans residues 528-585 (TSKTLQSWQNVCSRRLKKRSRRKPASVITSSGIYKKPQHPQKTHLAKYESTLQPPTCV). The short motif at 530 to 535 (KTLQSW) is the Lys-Thr-X-X-X-Trp motif, mediates interaction with the PDZ domain of Dvl family members element. Residues 583–585 (TCV) carry the PDZ-binding motif.

The protein belongs to the G-protein coupled receptor Fz/Smo family. As to quaternary structure, interacts with WNT7A. In terms of tissue distribution, expressed in the dorsal ectoderm overlying the developing spinal cord.

Its subcellular location is the cell membrane. Its function is as follows. Receptor for Wnt proteins. Functions in the canonical Wnt/beta-catenin signaling pathway. Activation by WNT7A induces expression of beta-catenin target genes. The canonical Wnt/beta-catenin signaling pathway leads to the activation of disheveled proteins, inhibition of GSK-3 kinase, nuclear accumulation of beta-catenin and activation of Wnt target genes. A second signaling pathway involving PKC and calcium fluxes has been seen for some family members, but it is not yet clear if it represents a distinct pathway or if it can be integrated in the canonical pathway, as PKC seems to be required for Wnt-mediated inactivation of GSK-3 kinase. Both pathways seem to involve interactions with G-proteins. May be involved in transduction and intercellular transmission of polarity information during tissue morphogenesis and/or in differentiated tissues. The chain is Frizzled-10 (FZD10) from Gallus gallus (Chicken).